A 238-amino-acid chain; its full sequence is Sugar fermentation stimulation protein homolog (238 aa).

This sequence belongs to the SfsA family.

This Shewanella denitrificans (strain OS217 / ATCC BAA-1090 / DSM 15013) protein is Sugar fermentation stimulation protein homolog.